The sequence spans 206 residues: Guanylate kinase (206 aa).

One can recognise a Guanylate kinase-like domain in the interval 5–183 (FNLLILSGPS…SKEIILSIAK (179 aa)). 12-19 (GPSGAGKS) is a binding site for ATP.

Belongs to the guanylate kinase family.

The protein resides in the cytoplasm. It catalyses the reaction GMP + ATP = GDP + ADP. In terms of biological role, essential for recycling GMP and indirectly, cGMP. This chain is Guanylate kinase (gmk), found in Helicobacter pylori (strain ATCC 700392 / 26695) (Campylobacter pylori).